The sequence spans 247 residues: Caffeoyl-CoA O-methyltransferase (247 aa).

Lysine 21 is a binding site for substrate. S-adenosyl-L-methionine contacts are provided by residues threonine 63, glutamate 85, 87 to 88 (GV), serine 93, aspartate 111, and alanine 140. A substrate-binding site is contributed by aspartate 163. A divalent metal cation is bound at residue aspartate 163. An S-adenosyl-L-methionine-binding site is contributed by aspartate 165. Residues aspartate 189 and asparagine 190 each coordinate a divalent metal cation. A substrate-binding site is contributed by asparagine 194.

The protein belongs to the class I-like SAM-binding methyltransferase superfamily. Cation-dependent O-methyltransferase family. CCoAMT subfamily. A divalent metal cation serves as cofactor.

It carries out the reaction (E)-caffeoyl-CoA + S-adenosyl-L-methionine = (E)-feruloyl-CoA + S-adenosyl-L-homocysteine + H(+). It participates in aromatic compound metabolism; phenylpropanoid biosynthesis. Functionally, methylates caffeoyl-CoA to feruloyl-CoA and 5-hydroxyferuloyl-CoA to sinapoyl-CoA. Plays a role in the synthesis of feruloylated polysaccharides. Involved in the reinforcement of the plant cell wall. Also involved in the responding to wounding or pathogen challenge by the increased formation of cell wall-bound ferulic acid polymers. The protein is Caffeoyl-CoA O-methyltransferase of Populus tremuloides (Quaking aspen).